A 3608-amino-acid polypeptide reads, in one-letter code: Serine-rich adhesin for platelets (3608 aa).

The signal sequence occupies residues M1–Y91. The interval A92–A302 is serine-rich repeat region 1, SRR1. 3 disordered regions span residues N105–Q280, D495–T3575, and L3588–Q3608. A compositionally biased stretch (low complexity) spans S114–T201. Residues Q209–G220 are compositionally biased toward polar residues. Composition is skewed to low complexity over residues S221–T234, T244–Q280, and T497–S3545. Residues P303–A755 form a non-repeat region (NRR) region. Positions S756–T3567 are serine-rich repeat region 2, SRR2. The LPXTG sorting signal signature appears at L3564–G3568. T3567 bears the Pentaglycyl murein peptidoglycan amidated threonine mark. A propeptide spans G3568 to Q3608 (removed by sortase). A compositionally biased stretch (basic residues) spans K3593–K3602.

The protein belongs to the serine-rich repeat protein (SRRP) family. Proteolytically cleaved by a metalloprotease. In terms of processing, glycosylated. It is probable that most of the Ser residues in SSR1 and SSR2 are O-GlcNAcylated. Sequential glycosylation by sugar transferases are able to generate complex sugar polymorphisms.

It is found in the secreted. Its subcellular location is the cell wall. In terms of biological role, mediates binding to human platelets, possibly through a receptor-ligand interaction. The sequence is that of Serine-rich adhesin for platelets (sraP) from Staphylococcus haemolyticus (strain JCSC1435).